A 248-amino-acid chain; its full sequence is Mannose-binding protein C (248 aa).

Positions 1–20 are cleaved as a signal peptide; it reads MSLIPSLSLLLMSMVAASYS. The Collagen-like domain maps to 42-99; it reads GINGFPGKDGRDGTKGEKGEPGQGLRGLQGPPGKLGPPGNPGPSGSPGPKGQKGDPGK. The tract at residues 43 to 107 is disordered; that stretch reads INGFPGKDGR…GKSPDCDSSL (65 aa). Pro-47 bears the 4-hydroxyproline mark. The span at 49-61 shows a compositional bias: basic and acidic residues; the sequence is KDGRDGTKGEKGE. 4 positions are modified to 4-hydroxyproline: Pro-73, Pro-79, Pro-82, and Pro-88. Residues 75–87 show a composition bias toward pro residues; it reads KLGPPGNPGPSGS. A compositionally biased stretch (basic and acidic residues) spans 93-102; that stretch reads QKGDPGKSPD. Residues 112 to 130 adopt a coiled-coil conformation; that stretch reads RKALQTEMARIKKWLTFSL. Residues 134–245 form the C-type lectin domain; sequence VGNKFFLTNG…CSSSHLAVCE (112 aa). 2 disulfide bridges follow: Cys-155–Cys-244 and Cys-222–Cys-236.

Oligomeric complex of 3 or more homotrimers. Interacts with MASP1 and MASP2. Interacts with MEP1A and MEP1B and may inhibit their catalytic activity. Post-translationally, hydroxylation on proline residues within the sequence motif, GXPG, is most likely to be 4-hydroxy as this fits the requirement for 4-hydroxylation in vertebrates.

Its subcellular location is the secreted. In terms of biological role, calcium-dependent lectin involved in innate immune defense. Binds mannose, fucose and N-acetylglucosamine on different microorganisms and activates the lectin complement pathway. Binds to late apoptotic cells, as well as to apoptotic blebs and to necrotic cells, but not to early apoptotic cells, facilitating their uptake by macrophages. The polypeptide is Mannose-binding protein C (MBL2) (Hylobates lar (Lar gibbon)).